A 175-amino-acid chain; its full sequence is Probable chemoreceptor glutamine deamidase CheD (175 aa).

This sequence belongs to the CheD family.

The enzyme catalyses L-glutaminyl-[protein] + H2O = L-glutamyl-[protein] + NH4(+). Its function is as follows. Probably deamidates glutamine residues to glutamate on methyl-accepting chemotaxis receptors (MCPs), playing an important role in chemotaxis. The sequence is that of Probable chemoreceptor glutamine deamidase CheD from Jannaschia sp. (strain CCS1).